Consider the following 572-residue polypeptide: Far upstream element-binding protein 3 (572 aa).

Ala2 is modified (N-acetylalanine). Residues Lys15 and Lys57 each participate in a glycyl lysine isopeptide (Lys-Gly) (interchain with G-Cter in SUMO2) cross-link. A Phosphothreonine modification is found at Thr76. 4 consecutive KH domains span residues 77–141, 162–228, 253–317, and 354–421; these read VITE…KRLL, STIQ…REMV, GGSI…AHII, and VQEI…RQLI. Residue Ser296 is modified to Phosphoserine. The disordered stretch occupies residues 426-521; sequence GGTNLGAPGA…SQPNYSKAWE (96 aa). Residues 496-514 are compositionally biased toward low complexity; it reads QQPTQQVPSQQSQPQSSQP. Ser539 and Ser569 each carry phosphoserine.

As to expression, detected in a number of cell lines.

It is found in the nucleus. In terms of biological role, may interact with single-stranded DNA from the far-upstream element (FUSE). May activate gene expression. The polypeptide is Far upstream element-binding protein 3 (FUBP3) (Homo sapiens (Human)).